A 177-amino-acid polypeptide reads, in one-letter code: Ribonuclease H (177 aa).

One can recognise an RNase H type-1 domain in the interval 1–142; the sequence is MSKQVEIFTD…ADELAREGMA (142 aa). Mg(2+) is bound by residues Asp10, Glu48, Asp70, and Asp134. Residues 126–138 show a composition bias toward basic and acidic residues; it reads GHTENERADELAR. The segment at 126-177 is disordered; the sequence is GHTENERADELAREGMAPFKKGSFKPAASAPKPDAQLKQPVATKARRSTQSY.

It belongs to the RNase H family. As to quaternary structure, monomer. Mg(2+) serves as cofactor.

Its subcellular location is the cytoplasm. The catalysed reaction is Endonucleolytic cleavage to 5'-phosphomonoester.. Endonuclease that specifically degrades the RNA of RNA-DNA hybrids. The chain is Ribonuclease H from Mesorhizobium japonicum (strain LMG 29417 / CECT 9101 / MAFF 303099) (Mesorhizobium loti (strain MAFF 303099)).